The following is a 371-amino-acid chain: O-phospho-L-seryl-tRNA:Cys-tRNA synthase 1 (371 aa).

Pyridoxal 5'-phosphate contacts are provided by residues 78-79, N183, and 206-208; these read AR and SGH. K209 bears the N6-(pyridoxal phosphate)lysine mark.

This sequence belongs to the SepCysS family. In terms of assembly, homodimer. Probably interacts with SepRS. Pyridoxal 5'-phosphate serves as cofactor.

It catalyses the reaction O-phospho-L-seryl-tRNA(Cys) + hydrogen sulfide + H(+) = L-cysteinyl-tRNA(Cys) + phosphate. Functionally, converts O-phospho-L-seryl-tRNA(Cys) (Sep-tRNA(Cys)) to L-cysteinyl-tRNA(Cys) (Cys-tRNA(Cys)). This chain is O-phospho-L-seryl-tRNA:Cys-tRNA synthase 1, found in Archaeoglobus fulgidus (strain ATCC 49558 / DSM 4304 / JCM 9628 / NBRC 100126 / VC-16).